Reading from the N-terminus, the 705-residue chain is Polyribonucleotide nucleotidyltransferase (705 aa).

Residues aspartate 486 and aspartate 492 each coordinate Mg(2+). Positions 553-612 (PQFHTMKVDPEKIRDIIGKGGATIRSITEETGASIDIDDDGTVKIYGDDGDSLQGAINRI) constitute a KH domain. Positions 622–690 (GEVYKGKVVR…QRGRIKLSIK (69 aa)) constitute an S1 motif domain.

Belongs to the polyribonucleotide nucleotidyltransferase family. In terms of assembly, component of the RNA degradosome, which is a multiprotein complex involved in RNA processing and mRNA degradation. It depends on Mg(2+) as a cofactor.

It is found in the cytoplasm. It catalyses the reaction RNA(n+1) + phosphate = RNA(n) + a ribonucleoside 5'-diphosphate. Its function is as follows. Involved in mRNA degradation. Catalyzes the phosphorolysis of single-stranded polyribonucleotides processively in the 3'- to 5'-direction. The chain is Polyribonucleotide nucleotidyltransferase from Teredinibacter turnerae (strain ATCC 39867 / T7901).